A 157-amino-acid chain; its full sequence is Ubiquitin-like protein 4A (157 aa).

Residues 1 to 76 (MQLTVKALQG…LNLVVKPLEK (76 aa)) enclose the Ubiquitin-like domain. Lysine 48 is covalently cross-linked (Glycyl lysine isopeptide (Lys-Gly) (interchain with G-Cter in ubiquitin)). Position 90 is a phosphoserine (serine 90). The segment at 96-138 (WHLISKVLARHFSAADASRVLEQLQRDYERSLSRLTLDDIERL) is required and sufficient for interaction with BAG6.

Component of the BAG6/BAT3 complex, at least composed of BAG6, UBL4A and GET4/TRC35. Interacts with BAG6; the interaction is direct and required for UBL4A protein stability. Interacts with USP13; may be indirect via BAG6. In terms of processing, polyubiquitinated. Ubiquitination by AMFR and deubiquitination by USP13 may regulate the interaction between the BAG6/BAT3 complex and SGTA and therefore may regulate client proteins fate.

It is found in the cytoplasm. It localises to the cytosol. The protein resides in the nucleus. Functionally, as part of a cytosolic protein quality control complex, the BAG6/BAT3 complex, maintains misfolded and hydrophobic patches-containing proteins in a soluble state and participates in their proper delivery to the endoplasmic reticulum or alternatively can promote their sorting to the proteasome where they undergo degradation. The BAG6/BAT3 complex is involved in the post-translational delivery of tail-anchored/type II transmembrane proteins to the endoplasmic reticulum membrane. Recruited to ribosomes, it interacts with the transmembrane region of newly synthesized tail-anchored proteins and together with SGTA and ASNA1 mediates their delivery to the endoplasmic reticulum. Client proteins that cannot be properly delivered to the endoplasmic reticulum are ubiquitinated and sorted to the proteasome. Similarly, the BAG6/BAT3 complex also functions as a sorting platform for proteins of the secretory pathway that are mislocalized to the cytosol either delivering them to the proteasome for degradation or to the endoplasmic reticulum. The BAG6/BAT3 complex also plays a role in the endoplasmic reticulum-associated degradation (ERAD), a quality control mechanism that eliminates unwanted proteins of the endoplasmic reticulum through their retrotranslocation to the cytosol and their targeting to the proteasome. It maintains these retrotranslocated proteins in an unfolded yet soluble state condition in the cytosol to ensure their proper delivery to the proteasome. In Oryctolagus cuniculus (Rabbit), this protein is Ubiquitin-like protein 4A (UBL4A).